Consider the following 40-residue polypeptide: Bacterioferritin heavy chain (40 aa).

One can recognise a Ferritin-like diiron domain in the interval 1–40 (MRGNPEVIDYLNMLIGGELAARDQYLIHSRMYEDWGLTKY). Residue Glu-18 participates in Fe cation binding.

The protein belongs to the bacterioferritin family. Oligomer consisting of two types of subunits: light chain and heavy chain.

Its function is as follows. May perform analogous functions in iron detoxification and storage to that of animal ferritins. Contains approximately 750 iron atoms per molecule. This is Bacterioferritin heavy chain from Absidia spinosa.